We begin with the raw amino-acid sequence, 382 residues long: Type 2 DNA topoisomerase 6 subunit A (382 aa).

Residues 14-155 (YDPQKVLKKL…MHITADRRGY (142 aa)) enclose the Topo IIA-type catalytic domain. Catalysis depends on tyrosine 108, which acts as the O-(5'-phospho-DNA)-tyrosine intermediate. Mg(2+) is bound by residues glutamate 202 and aspartate 254.

It belongs to the TOP6A family. In terms of assembly, homodimer. Heterotetramer of two Top6A and two Top6B chains. Requires Mg(2+) as cofactor.

The enzyme catalyses ATP-dependent breakage, passage and rejoining of double-stranded DNA.. Its function is as follows. Relaxes both positive and negative superturns and exhibits a strong decatenase activity. This is Type 2 DNA topoisomerase 6 subunit A from Pyrococcus abyssi (strain GE5 / Orsay).